We begin with the raw amino-acid sequence, 366 residues long: MTPEHLPTEQYEAQLAEKVARLQSMMAPFSGLVPEVFRSPVSHYRMRAEFRLWHDGDDLYHIMFDQQTKSRIRVDTFPAASQLINTLMKAMIAGVRDNHALRHKLFQIDYLTTLSNQAVVSLLYHKKLDEEWREAATALRDALRAQGLNVHLIGRATKTKIELDQDYIDERLPVAGKEIIYRQVENSFTQPNAAMNIQMLEWALEVTKDSKGDLLELYCGNGNFSLALARNFNRVLATEIAKPSVAAAQYNIAANHIDNVQIIRMAAEEFTQAMNGVREFNRLQGIDLKRYQCETIFVDPPRSGLDSETEKMVQAYPRILYISCNPETLCKNLETLSQTHTVSRLALFDQFPYTHHMECGVLLTAR.

S-adenosyl-L-methionine contacts are provided by Q190, Y218, N223, E239, and D299. C324 serves as the catalytic Nucleophile. Catalysis depends on E358, which acts as the Proton acceptor.

It belongs to the class I-like SAM-binding methyltransferase superfamily. RNA M5U methyltransferase family. TrmA subfamily.

It carries out the reaction uridine(54) in tRNA + S-adenosyl-L-methionine = 5-methyluridine(54) in tRNA + S-adenosyl-L-homocysteine + H(+). The catalysed reaction is uridine(341) in tmRNA + S-adenosyl-L-methionine = 5-methyluridine(341) in tmRNA + S-adenosyl-L-homocysteine + H(+). Its function is as follows. Dual-specificity methyltransferase that catalyzes the formation of 5-methyluridine at position 54 (m5U54) in all tRNAs, and that of position 341 (m5U341) in tmRNA (transfer-mRNA). The protein is tRNA/tmRNA (uracil-C(5))-methyltransferase of Salmonella paratyphi A (strain ATCC 9150 / SARB42).